Consider the following 2029-residue polypeptide: MGLQMTAARPIAALSLLVLSLLTWTHPTIVDAAHPPEIIRKPQNQGVRVGGVASFYCAARGDPPPSIVWRKNGKKVSGTQSRYTVLEQPGGISILRIEPVRAGRDDAPYECVAENGVGDAVSADATLTIYEGDKTPAGFPVITQGPGTRVIEVGHTVLMTCKAIGNPTPNIYWIKNQTKVDMSNPRYSLKDGFLQIENSREEDQGKYECVAENSMGTEHSKATNLYVKVRRVPPTFSRPPETISEVMLGSNLNLSCIAVGSPMPHVKWMKGSEDLTPENEMPIGRNVLQLINIQESANYTCIAASTLGQIDSVSVVKVQSLPTAPTDVQISEVTATSVRLEWSYKGPEDLQYYVIQYKPKNANQAFSEISGIITMYYVVRALSPYTEYEFYVIAVNNIGRGPPSAPATCTTGETKMESAPRNVQVRTLSSSTMVITWEPPETPNGQVTGYKVYYTTNSNQPEASWNSQMVDNSELTTVSELTPHAIYTVRVQAYTSMGAGPMSTPVQVKAQQGVPSQPSNFRATDIGETAVTLQWTKPTHSSENIVHYELYWNDTYANQAHHKRISNSEAYTLDGLYPDTLYYIWLAARSQRGEGATTPPIPVRTKQYVPGAPPRNITAIATSSTTISLSWLPPPVERSNGRIIYYKVFFVEVGREDDEATTMTLNMTSIVLDELKRWTEYKIWVLAGTSVGDGPRSHPIILRTQEDVPGDPQDVKATPLNSTSIHVSWKPPLEKDRNGIIRGYHIHAQELRDEGKGFLNEPFKFDVVDTLEFNVTGLQPDTKYSIQVAALTRKGDGDRSAAIVVKTPGGVPVRPTVSLKIMEREPIVSIELEWERPAQTYGELRGYRLRWGVKDQALKEEMLSGPQMTKKRFDNLERGVEYEFRVAGSNHIGIGQETVKIFQTPEGTPGGPPSNITIRFQTPDVLCVTWDPPTREHRNGIITRYDVQFHKKIDHGLGSERNMTLRKAVFTNLEENTEYIFRVRAYTKQGAGPFSDKLIVETERDMGRAPMSLQAEATSEQTAEIWWEPVTSRGKLLGYKIFYTMTAVEDLDDWQTKTVGLTESADLVNLEKFAQYAVAIAARFKNGLGRLSEKVTVRIKPEDVPLNLRAHDVSTHSMTLSWSPPIRLTPVNYKISFDAMKVFVDSQGFSQTQIVPKREIILKHYVKTHTINELSPFTTYNVNVSAIPSDYSYRPPTKITVTTQMAAPQPMVKPDFYGVVNGEEILVILPQASEEYGPISHYYLVVVPEDKSNLHKIPDQFLTDDLLPGRNKPERPNAPYIAAKFPQRSIPFTFHLGSGDDYHNFTNRKLEREKRYRIFVRAVVDTPQKHLYTSSPFSEFLSLDMREAPPGERPHRPDPNWPAEPEVSVNRNKDEPEILWVVLPLMVSTFIVSTALIVLCVVKRRRQPCKTPDQAAVTRPLMAADLGAGPTPSDPVDMRRLNFQTPGMISHPPIPISEFANHIERLKSNDNQKFSQEYESIEPGQQFTWDNSNLEHNKSKNRYANVTAYDHSRVQLPAVEGVVGSDYINANYCDGYRKHNAYVATQGPLQETFVDFWRMCWELKTATIVMMTRLEERTRIKCDQYWPTRGTETYGQIFVTITETQELATYSIRTFQLCRQGFNDRREIKQLQFTAWPDHGVPDHPAPFLQFLRRCRALTPPESGPVIVHCSAGVGRTGCYIVIDSMLERMKHEKIIDIYGHVTCLRAQRNYMVQTEDQYIFIHDAILEAIICGVTEVPARNLHTHLQKLLITEPGETISGMEVEFKKLSNVKMDSSKFVTANLPCNKHKNRLVHILPYESSRVYLTPIHGIEGSDYVNASFIDGYRYRSAYIAAQGPVQDAAEDFWRMLWEHNSTIVVMLTKLKEMGREKCFQYWPHERSVRYQYYVVDPIAEYNMPQYKLREFKVTDARDGSSRTVRQFQFIDWPEQGVPKSGEGFIDFIGQVHKTKEQFGQDGPITVHCSAGVGRSGVFITLSIVLERMQYEGVLDVFQTVRILRSQRPAMVQTEDQYHFCYRAALEYLGSFDNYTN.

Positions 1-32 (MGLQMTAARPIAALSLLVLSLLTWTHPTIVDA) are cleaved as a signal peptide. At 33–1377 (AHPPEIIRKP…SVNRNKDEPE (1345 aa)) the chain is on the extracellular side. Ig-like C2-type domains follow at residues 36–128 (PEII…ATLT), 140–224 (PVIT…KATN), and 234–316 (PTFS…VSVV). 2 disulfide bridges follow: Cys57/Cys111 and Cys161/Cys209. 70-82 (RKNGKKVSGTQSR) is a binding site for heparin. 3 N-linked (GlcNAc...) asparagine glycosylation sites follow: Asn176, Asn253, and Asn298. Cys256 and Cys301 form a disulfide bridge. 9 consecutive Fibronectin type-III domains span residues 324-414 (APTD…TGET), 419-513 (APRN…AQQG), 517-608 (QPSN…TKQY), 613-707 (PPRN…TQED), 711-810 (DPQD…TPGG), 815-911 (PTVS…TPGG), 912-1005 (PPSN…TERD), 1009-1102 (APMS…IKPE), and 1104-1206 (VPLN…TQMA). N-linked (GlcNAc...) asparagine glycans are attached at residues Asn553, Asn616, Asn666, Asn721, and Asn774. Asn915 and Asn962 each carry an N-linked (GlcNAc...) asparagine glycan. N-linked (GlcNAc...) asparagine glycans are attached at residues Asn1183 and Asn1304. Basic and acidic residues predominate over residues 1346 to 1358 (REAPPGERPHRPD). The tract at residues 1346-1369 (REAPPGERPHRPDPNWPAEPEVSV) is disordered. Residues 1378–1402 (ILWVVLPLMVSTFIVSTALIVLCVV) traverse the membrane as a helical segment. The Cytoplasmic segment spans residues 1403-2029 (KRRRQPCKTP…YLGSFDNYTN (627 aa)). 2 Tyrosine-protein phosphatase domains span residues 1474 to 1729 (FSQE…ILEA) and 1761 to 2020 (MEVE…ALEY). Residue Thr1572 is modified to Phosphothreonine. Residues Asp1638, 1670–1676 (CSAGVGR), and Gln1714 contribute to the substrate site. Cys1670 serves as the catalytic Phosphocysteine intermediate. Residue Cys1961 is the Phosphocysteine intermediate of the active site.

It belongs to the protein-tyrosine phosphatase family. Receptor class 2A subfamily. Selectively expressed in a subset of axons and pioneer neurons in the embryo.

The protein localises to the membrane. The catalysed reaction is O-phospho-L-tyrosyl-[protein] + H2O = L-tyrosyl-[protein] + phosphate. Its function is as follows. Possible cell adhesion receptor. It possesses an intrinsic protein tyrosine phosphatase activity (PTPase). It controls motor axon guidance. In the developing eye, has a role in normal axonal targeting of the R7 photoreceptor, where it negatively regulates bdl. Inhibits bdl cell adhesion activity in vitro; this effect is independent of its PTPase function. The sequence is that of Tyrosine-protein phosphatase Lar (Lar) from Drosophila melanogaster (Fruit fly).